The primary structure comprises 282 residues: MMPSTPRTSIPSITLNDENTMPLLGLGVAELSEDETERAVLAALEIGCRLIDTAAAYGNEAAVSRAIAASGIPRAQLFVTTKLATPDQGFTKSQDACNASLDRLGMDYVDLYLIHWPAPPVGQYVDAWGGMIQSRGEGHARSIGVCNFTEEHLSAIIDLTFVTPAVNQIELHPLLNQDEMRKSNAQHNVITQSYTPLVLGRLMDNSTLTAIAAEYGKTPAQVLLRWNLQLGNAVVFRSAKAEHIASNFDVFDFELAVNHMDAMNELHDGTRLRPDPETYAGS.

The active-site Proton donor is the Y57. Residues L197, V235, R237, S238, A239, S246, N247, and R273 each contribute to the NADPH site.

It belongs to the aldo/keto reductase family.

The sequence is that of Aldo-keto reductase ML1669 from Mycobacterium leprae (strain TN).